The primary structure comprises 316 residues: Ribosomal RNA small subunit methyltransferase H (316 aa).

S-adenosyl-L-methionine contacts are provided by residues 35–37 (AGH), aspartate 55, phenylalanine 84, aspartate 105, and glutamine 112.

Belongs to the methyltransferase superfamily. RsmH family.

The protein localises to the cytoplasm. It catalyses the reaction cytidine(1402) in 16S rRNA + S-adenosyl-L-methionine = N(4)-methylcytidine(1402) in 16S rRNA + S-adenosyl-L-homocysteine + H(+). Functionally, specifically methylates the N4 position of cytidine in position 1402 (C1402) of 16S rRNA. This chain is Ribosomal RNA small subunit methyltransferase H, found in Streptococcus sanguinis (strain SK36).